Here is a 331-residue protein sequence, read N- to C-terminus: Ketol-acid reductoisomerase (NADP(+)) (331 aa).

The KARI N-terminal Rossmann domain maps to 2 to 182 (ARMYYDEDAN…GGTRAGVLET (181 aa)). Residues 25 to 28 (YGSQ), serine 51, serine 53, and 83 to 86 (DEVQ) contribute to the NADP(+) site. Histidine 108 is an active-site residue. Residue glycine 134 coordinates NADP(+). Positions 183–328 (TFREETETDL…KDLRAMFSWL (146 aa)) constitute a KARI C-terminal knotted domain. Positions 191, 195, 227, and 231 each coordinate Mg(2+). Serine 252 provides a ligand contact to substrate.

This sequence belongs to the ketol-acid reductoisomerase family. It depends on Mg(2+) as a cofactor.

It catalyses the reaction (2R)-2,3-dihydroxy-3-methylbutanoate + NADP(+) = (2S)-2-acetolactate + NADPH + H(+). The catalysed reaction is (2R,3R)-2,3-dihydroxy-3-methylpentanoate + NADP(+) = (S)-2-ethyl-2-hydroxy-3-oxobutanoate + NADPH + H(+). It participates in amino-acid biosynthesis; L-isoleucine biosynthesis; L-isoleucine from 2-oxobutanoate: step 2/4. Its pathway is amino-acid biosynthesis; L-valine biosynthesis; L-valine from pyruvate: step 2/4. In terms of biological role, involved in the biosynthesis of branched-chain amino acids (BCAA). Catalyzes an alkyl-migration followed by a ketol-acid reduction of (S)-2-acetolactate (S2AL) to yield (R)-2,3-dihydroxy-isovalerate. In the isomerase reaction, S2AL is rearranged via a Mg-dependent methyl migration to produce 3-hydroxy-3-methyl-2-ketobutyrate (HMKB). In the reductase reaction, this 2-ketoacid undergoes a metal-dependent reduction by NADPH to yield (R)-2,3-dihydroxy-isovalerate. The chain is Ketol-acid reductoisomerase (NADP(+)) from Nostoc punctiforme (strain ATCC 29133 / PCC 73102).